The following is a 510-amino-acid chain: Glycosyl hydrolase YngK (510 aa).

Residues M1 to A30 form the signal peptide.

The protein belongs to the glycosyl hydrolase-like 10 (GHL10) family.

This Bacillus subtilis (strain 168) protein is Glycosyl hydrolase YngK (yngK).